A 402-amino-acid chain; its full sequence is Potassium channel subfamily K member 9 (402 aa).

Topologically, residues methionine 1 to threonine 8 are cytoplasmic. The helical transmembrane segment at leucine 9–leucine 29 threads the bilayer. Over glutamate 30–isoleucine 88 the chain is Extracellular. An N-linked (GlcNAc...) asparagine glycan is attached at asparagine 53. The segment at residues threonine 89–proline 101 is an intramembrane region (pore-forming). K(+) is bound by residues threonine 93, isoleucine 94, glycine 95, and tyrosine 96. The segment at threonine 93 to histidine 98 is selectivity filter 1. The Extracellular segment spans residues glycine 102–lysine 107. A helical transmembrane segment spans residues alanine 108–leucine 128. The Cytoplasmic segment spans residues glycine 129 to asparagine 158. The helical transmembrane segment at methionine 159 to serine 179 threads the bilayer. Topologically, residues glutamine 180 to phenylalanine 194 are extracellular. The segment at residues isoleucine 195 to alanine 207 is an intramembrane region (pore-forming). K(+) contacts are provided by threonine 199, isoleucine 200, glycine 201, and phenylalanine 202. Positions threonine 199–aspartate 204 are selectivity filter 2. Topologically, residues leucine 208 to proline 218 are extracellular. A helical membrane pass occupies residues phenylalanine 219 to leucine 239. Topologically, residues asparagine 240 to isoleucine 402 are cytoplasmic. Positions valine 243–threonine 248 are X-gate.

It belongs to the two pore domain potassium channel (TC 1.A.1.8) family. Homodimer. Heterodimer with KCNK1. Heterodimer with KCNK3. Expressed in adrenal glands mainly in outer zona glomerulosa and inner zona medullaris. Expressed in retinal ganglion cells. Expressed in dentate gyrus (at protein level).

The protein localises to the cell membrane. Its subcellular location is the mitochondrion inner membrane. It localises to the cell projection. The protein resides in the dendrite. It carries out the reaction K(+)(in) = K(+)(out). The enzyme catalyses Na(+)(in) = Na(+)(out). With respect to regulation, inhibited by NTS:NTSR1 signaling in dentate gyrus granule cells. K(+) channel that conducts voltage-dependent outward rectifying currents upon membrane depolarization. Voltage sensing is coupled to K(+) electrochemical gradient in an 'ion flux gating' mode where outward but not inward ion flow opens the gate. Changes ion selectivity and becomes permeable to Na(+) ions in response to extracellular acidification. Protonation of the pH sensor His-98 stabilizes C-type inactivation conformation likely converting the channel from outward K(+)-conducting, to inward Na(+)-conducting to nonconductive state. Homo- and heterodimerizes to form functional channels with distinct regulatory and gating properties. Allows K(+) currents with fast-gating kinetics important for the repolarization and hyperpolarization phases of action potentials. In granule neurons, hyperpolarizes the resting membrane potential to limit intrinsic neuronal excitability, but once the action potential threshold is reached, supports high-frequency action potential firing and increased neuronal excitability. Homomeric and/or heteromeric KCNK3:KCNK9 channels operate in cerebellar granule cells, whereas heteromeric KCNK1:KCNK9 enables currents in hippocampal dentate gyrus granule neurons. Dispensable for central chemosensory respiration i.e. breathing controlled by brainstem CO2/pH, it rather conducts pH-sensitive currents and controls the firing rate of serotonergic raphe neurons involved in potentiation of the respiratory chemoreflex. In retinal ganglion cells, mediates outward rectifying currents that regulate action potentials in response to acidification of the synaptic cleft. Involved in transmission of image-forming and nonimage-forming visual information in the retina. In adrenal gland, contributes to the maintenance of a hyperpolarized resting membrane potential of aldosterone-producing cells at zona glomerulosa and limits aldosterone release as part of a regulatory mechanism that controls arterial blood pressure and electrolyte homeostasis. This Mus musculus (Mouse) protein is Potassium channel subfamily K member 9.